Reading from the N-terminus, the 122-residue chain is MIQTQSYLNVADNSGARKIMCIRVLGTSNPSYASIGDVIIGVVKDASPNMPVKRSDVVRAVVVRTRKALRRTDGMSIRFGDNAAVIINQDNNPRGTRVFGPIARELRDKNFSKIVSLAPEVV.

Belongs to the universal ribosomal protein uL14 family. As to quaternary structure, part of the 50S ribosomal subunit.

The protein resides in the plastid. The protein localises to the chloroplast. Its function is as follows. Binds to 23S rRNA. This chain is Large ribosomal subunit protein uL14c, found in Pyropia yezoensis (Susabi-nori).